Consider the following 375-residue polypeptide: Chaperone protein DnaJ (375 aa).

The J domain occupies 5–70 (DYYEVLGVER…GKRSAYDQYG (66 aa)). Residues 134–212 (GTTVTIRVPT…CHGQGRVEES (79 aa)) form a CR-type zinc finger. The Zn(2+) site is built by Cys-147, Cys-150, Cys-164, Cys-167, Cys-186, Cys-189, Cys-200, and Cys-203. 4 CXXCXGXG motif repeats span residues 147–154 (CKTCDGTG), 164–171 (CTTCGGIG), 186–193 (CPRCHGSG), and 200–207 (CGSCHGQG).

This sequence belongs to the DnaJ family. As to quaternary structure, homodimer. The cofactor is Zn(2+).

The protein resides in the cytoplasm. In terms of biological role, participates actively in the response to hyperosmotic and heat shock by preventing the aggregation of stress-denatured proteins and by disaggregating proteins, also in an autonomous, DnaK-independent fashion. Unfolded proteins bind initially to DnaJ; upon interaction with the DnaJ-bound protein, DnaK hydrolyzes its bound ATP, resulting in the formation of a stable complex. GrpE releases ADP from DnaK; ATP binding to DnaK triggers the release of the substrate protein, thus completing the reaction cycle. Several rounds of ATP-dependent interactions between DnaJ, DnaK and GrpE are required for fully efficient folding. Also involved, together with DnaK and GrpE, in the DNA replication of plasmids through activation of initiation proteins. This is Chaperone protein DnaJ from Ectopseudomonas mendocina (strain ymp) (Pseudomonas mendocina).